We begin with the raw amino-acid sequence, 99 residues long: Seminal vesicle secretory protein 6 (99 aa).

An N-terminal signal peptide occupies residues 1–21; that stretch reads MSPTSFFLLTMLLVLVTETAA.

It belongs to the SVP2/SVP5/SVP6 family. In terms of tissue distribution, testis.

The protein localises to the secreted. It is found in the extracellular space. The sequence is that of Seminal vesicle secretory protein 6 (Svs6) from Mus musculus (Mouse).